Consider the following 101-residue polypeptide: UPF0751 protein DSY3086 (101 aa).

It belongs to the UPF0751 family.

The protein is UPF0751 protein DSY3086 of Desulfitobacterium hafniense (strain Y51).